The primary structure comprises 227 residues: Cytochrome c oxidase subunit 2 (227 aa).

Residues 1–14 (MAYPFQLGLQDATS) lie on the Mitochondrial intermembrane side of the membrane. A helical transmembrane segment spans residues 15-45 (PIMEELTNFHDHTLMIVFLISSLVLYIISLM). At 46-59 (LTTKLTHTSTMDAQ) the chain is on the mitochondrial matrix side. The helical transmembrane segment at 60–87 (EVETIWTILPAVILILIALPSLRILYMM) threads the bilayer. The Mitochondrial intermembrane portion of the chain corresponds to 88–227 (DEINNPALTV…HFENWSASMI (140 aa)). H161, C196, E198, C200, H204, and M207 together coordinate Cu cation. Residue E198 participates in Mg(2+) binding.

Belongs to the cytochrome c oxidase subunit 2 family. As to quaternary structure, component of the cytochrome c oxidase (complex IV, CIV), a multisubunit enzyme composed of 14 subunits. The complex is composed of a catalytic core of 3 subunits MT-CO1, MT-CO2 and MT-CO3, encoded in the mitochondrial DNA, and 11 supernumerary subunits COX4I, COX5A, COX5B, COX6A, COX6B, COX6C, COX7A, COX7B, COX7C, COX8 and NDUFA4, which are encoded in the nuclear genome. The complex exists as a monomer or a dimer and forms supercomplexes (SCs) in the inner mitochondrial membrane with NADH-ubiquinone oxidoreductase (complex I, CI) and ubiquinol-cytochrome c oxidoreductase (cytochrome b-c1 complex, complex III, CIII), resulting in different assemblies (supercomplex SCI(1)III(2)IV(1) and megacomplex MCI(2)III(2)IV(2)). Found in a complex with TMEM177, COA6, COX18, COX20, SCO1 and SCO2. Interacts with TMEM177 in a COX20-dependent manner. Interacts with COX20. Interacts with COX16. Cu cation serves as cofactor.

It is found in the mitochondrion inner membrane. The catalysed reaction is 4 Fe(II)-[cytochrome c] + O2 + 8 H(+)(in) = 4 Fe(III)-[cytochrome c] + 2 H2O + 4 H(+)(out). Its function is as follows. Component of the cytochrome c oxidase, the last enzyme in the mitochondrial electron transport chain which drives oxidative phosphorylation. The respiratory chain contains 3 multisubunit complexes succinate dehydrogenase (complex II, CII), ubiquinol-cytochrome c oxidoreductase (cytochrome b-c1 complex, complex III, CIII) and cytochrome c oxidase (complex IV, CIV), that cooperate to transfer electrons derived from NADH and succinate to molecular oxygen, creating an electrochemical gradient over the inner membrane that drives transmembrane transport and the ATP synthase. Cytochrome c oxidase is the component of the respiratory chain that catalyzes the reduction of oxygen to water. Electrons originating from reduced cytochrome c in the intermembrane space (IMS) are transferred via the dinuclear copper A center (CU(A)) of subunit 2 and heme A of subunit 1 to the active site in subunit 1, a binuclear center (BNC) formed by heme A3 and copper B (CU(B)). The BNC reduces molecular oxygen to 2 water molecules using 4 electrons from cytochrome c in the IMS and 4 protons from the mitochondrial matrix. The sequence is that of Cytochrome c oxidase subunit 2 (MT-CO2) from Berylmys bowersi (Bower's white-toothed rat).